The primary structure comprises 447 residues: Polyamine export protein (447 aa).

The Cytoplasmic segment spans residues 1–4; the sequence is MLNS. A CNNM transmembrane domain is found at 1 to 197; that stretch reads MLNSIFIIFC…ALAGVLRKQE (197 aa). The helical transmembrane segment at 5-25 threads the bilayer; it reads IFIIFCLIAVSAFFSISEISL. Over 26 to 54 the chain is Periplasmic; it reads AASRKIKLKLLADEGSINAQRVLKMQENP. A helical membrane pass occupies residues 55 to 75; it reads GMFFTVVQIGLNAVAILGGIV. Over 76–99 the chain is Cytoplasmic; it reads GDAAFSPAFSALFSHYMSPELSEQ. A helical membrane pass occupies residues 100–120; the sequence is LSFILSFSLVTGLFILFADLT. The Periplasmic segment spans residues 121-141; sequence PKRIGMIAPEAVALRIINPMR. A helical transmembrane segment spans residues 142-162; that stretch reads FCLFVFRPLVWLFNGMANNIF. Residues 163–447 are Cytoplasmic-facing; the sequence is RLFKIPMVRK…DAQGKEDSAA (285 aa). CBS domains follow at residues 216–275 and 282–343; these read MTSR…NQSM and QIRN…GLEE.

Belongs to the UPF0053 family. PaeA subfamily.

The protein resides in the cell inner membrane. Functionally, involved in cadaverine and putrescine tolerance in stationary phase. May facilitate the efflux of both cadaverine and putrescine from the cytoplasm, reducing potentially toxic levels under certain stress conditions. This chain is Polyamine export protein, found in Salmonella typhimurium (strain 14028s / SGSC 2262).